The following is a 667-amino-acid chain: Trifunctional UDP-glucose 4,6-dehydratase/UDP-4-keto-6-deoxy-D-glucose 3,5-epimerase/UDP-4-keto-L-rhamnose-reductase RHM2 (667 aa).

Position 15 to 21 (Gly-15 to Ala-21) interacts with NAD(+). Residue Thr-134 coordinates substrate. Catalysis depends on Asp-135, which acts as the Proton donor. Catalysis depends on proton acceptor residues Glu-136 and Tyr-161. Gly-389–Gly-395 lines the NADP(+) pocket.

In the N-terminal section; belongs to the NAD(P)-dependent epimerase/dehydratase family. dTDP-glucose dehydratase subfamily. The protein in the C-terminal section; belongs to the dTDP-4-dehydrorhamnose reductase family. NAD(+) is required as a cofactor. NADP(+) serves as cofactor. Expressed in roots, stems, leaves, seedlings, inflorescence tips, and siliques.

It carries out the reaction UDP-alpha-D-glucose = UDP-4-dehydro-6-deoxy-alpha-D-glucose + H2O. It functions in the pathway carbohydrate biosynthesis. Functionally, trifunctional enzyme involved in UDP-beta-L-rhamnose biosynthesis, a precursor of the primary cell wall components rhamnogalacturonan I (RG-I) and rhamnogalacturonan II (RG-II). Catalyzes the dehydration of UDP-glucose to form UDP-4-dehydro-6-deoxy-D-glucose followed by the epimerization of the C3' and C5' positions of UDP-4-dehydro-6-deoxy-D-glucose to form UDP-4-keto-beta-L-rhamnose and the reduction of UDP-4-keto-beta-L-rhamnose to yield UDP-beta-L-rhamnose. Required for the normal seed coat epidermal development. In Arabidopsis thaliana (Mouse-ear cress), this protein is Trifunctional UDP-glucose 4,6-dehydratase/UDP-4-keto-6-deoxy-D-glucose 3,5-epimerase/UDP-4-keto-L-rhamnose-reductase RHM2.